Here is a 495-residue protein sequence, read N- to C-terminus: MAENQANAAADEAAEPIVGHVTRIQGSVIDVEFPVGHMPDIYNALTVEIKQMGQQEEGEVKDSVITLEVEQHLGDSTARCVALKSTDGLVRGAIVHDTGGPIEVPVGDVTKGHVFDVSGHILNKKPGEKIVIKERWPIHRNPPAFDQLESKTQMFETGIKVIDLLTPYVQGGKIGLFGGAGVGKTVLIQEMIQRVAQNHGGVSVFAGVGERTREGNDLIGEMDEAGVLEKTALVFGQMDEQPGTRLRVPLTALTMAEYFRDVQNQDVLLFIDNIFRFTQAGSEVSTLLGRMPSAVGYQPNLADEMGSLQERITSTRGHSITSLQAIYVPADDYTDPAPATTFAHLDATTELSRDIASRGIYPAVDPLASTSRILDPRYVGQAHYDCANRVKAILQRNKELQDIIALIGIDELGEEDKTTVNRARKIEQFLGQNFYVAEKFTGVPGSYVPAEETIEAFTRICDGVYDNVPEQAFSGIGGIEDLEKKWHKMQKEYGD.

ATP is bound at residue 178–185 (GGAGVGKT).

Belongs to the ATPase alpha/beta chains family. In terms of assembly, F-type ATPases have 2 components, CF(1) - the catalytic core - and CF(0) - the membrane proton channel. CF(1) has five subunits: alpha(3), beta(3), gamma(1), delta(1), epsilon(1). CF(0) has three main subunits: a(1), b(2) and c(9-12). The alpha and beta chains form an alternating ring which encloses part of the gamma chain. CF(1) is attached to CF(0) by a central stalk formed by the gamma and epsilon chains, while a peripheral stalk is formed by the delta and b chains.

The protein resides in the cell membrane. The enzyme catalyses ATP + H2O + 4 H(+)(in) = ADP + phosphate + 5 H(+)(out). Produces ATP from ADP in the presence of a proton gradient across the membrane. The catalytic sites are hosted primarily by the beta subunits. This chain is ATP synthase subunit beta, found in Bifidobacterium animalis subsp. lactis (strain AD011).